We begin with the raw amino-acid sequence, 244 residues long: Dirigent protein 18 (244 aa).

The first 25 residues, 1 to 25 (MMKQSPFSLLTSIFLIAALFTATTA), serve as a signal peptide directing secretion.

This sequence belongs to the plant dirigent protein family. Homodimer.

It localises to the secreted. Its subcellular location is the extracellular space. The protein resides in the apoplast. Its function is as follows. Dirigent proteins impart stereoselectivity on the phenoxy radical-coupling reaction, yielding optically active lignans from two molecules of coniferyl alcohol in the biosynthesis of lignans, flavonolignans, and alkaloids and thus plays a central role in plant secondary metabolism. The chain is Dirigent protein 18 (DIR18) from Arabidopsis thaliana (Mouse-ear cress).